Reading from the N-terminus, the 65-residue chain is MPKMKTVSGAAKRFKKTGSGRFKSKQSHLRHILTKKSSKRKRHLRGKKLVHDSDTKLVQRMLPYV.

Positions 1-30 (MPKMKTVSGAAKRFKKTGSGRFKSKQSHLR) are disordered. The segment covering 12–30 (KRFKKTGSGRFKSKQSHLR) has biased composition (basic residues).

Belongs to the bacterial ribosomal protein bL35 family.

The chain is Large ribosomal subunit protein bL35 from Alteromonas mediterranea (strain DSM 17117 / CIP 110805 / LMG 28347 / Deep ecotype).